A 684-amino-acid chain; its full sequence is Soluble guanylate cyclase gcy-32 (684 aa).

Histidine 105 contacts heme. A coiled-coil region spans residues 396–432 (DVEVNLQLEANNEQLETMTRELELERQKTDSILKDML). In terms of domain architecture, Guanylate cyclase spans 454 to 582 (TVMFCDLPAF…ETVTLASQME (129 aa)). Residues aspartate 459 and aspartate 503 each coordinate Mg(2+).

Belongs to the adenylyl cyclase class-4/guanylyl cyclase family. In terms of assembly, heterodimer; with other soluble guanylate cyclases. Requires heme as cofactor. As to expression, expressed in a small number of neurons, corresponding to URX, AQR and PQR neurons.

It is found in the cytoplasm. The catalysed reaction is GTP = 3',5'-cyclic GMP + diphosphate. May be regulated by molecular oxygen. Probably not activated by nitric oxide (NO). Its function is as follows. Synthesizes cyclic GMP (cGMP) from GTP. Influences aerotaxis responses, aggregation and bordering behaviors (gathering around the edge of a bacterial lawn) in combination with other soluble guanylate cyclases. This is Soluble guanylate cyclase gcy-32 (gcy-32) from Caenorhabditis elegans.